The following is a 331-amino-acid chain: MELITKEESKTNYEYGCDPYNRPIGELLKNGIVVIDKPSGPTSHEVSAWVRDILKLKLAGHGGTLDPKVTGVLPVALENTSKCISVWHMIPKEYVCLMHLHRDTEEEELLKIFKKFTGRIFQRPPLKAAVKRSLRIRKIYELELLEKDGRDVLFRVRCQSGTYIRTLAEDMGEALGTSAHMQELRRIVSGPFTEKDIVYLQDLTDAYIFWKENGDETELRKIIKPMEYGLQHINKIIVKDSAVDAICHGANVYLNGVSKLSKGIGADETVLIETLKGEAIGIGTALLNTKNVLKESKNEEDNREKYKEPIVDIERIFMSPNTYPKMWKKKK.

Aspartate 66 acts as the Nucleophile in catalysis. The region spanning 233-307 is the PUA domain; that stretch reads INKIIVKDSA…NEEDNREKYK (75 aa).

The protein belongs to the pseudouridine synthase TruB family. Type 2 subfamily.

The catalysed reaction is uridine(55) in tRNA = pseudouridine(55) in tRNA. Functionally, could be responsible for synthesis of pseudouridine from uracil-55 in the psi GC loop of transfer RNAs. This chain is Probable tRNA pseudouridine synthase B, found in Methanococcus aeolicus (strain ATCC BAA-1280 / DSM 17508 / OCM 812 / Nankai-3).